The primary structure comprises 632 residues: Transcription factor tazR (632 aa).

Positions 20–47 (CNECRARKLRCDRVRPTCGTCESLGVTC) form a DNA-binding region, zn(2)-C6 fungal-type. Residues 77–130 (WNGQQKAAGGSPGESPPCSEGGQTLRAVSESTSDGVHDEDHANGARPPSSQSSI) are disordered.

The protein resides in the nucleus. Its function is as follows. Transcription factor that regulates the expression of the gene cluster that mediates the biosynthesis of azaterrilone A and other azaphilones, a class of fungal metabolites characterized by a highly oxygenated pyrano-quinone bicyclic core and exhibiting a broad range of bioactivities. This Aspergillus terreus (strain NIH 2624 / FGSC A1156) protein is Transcription factor tazR.